A 415-amino-acid chain; its full sequence is Mulatexin (415 aa).

Residues 1-21 (MKFRTLLIIFSLVFLLEIVSA) form the signal peptide. Positions 23–66 (EPQCGRDAGGALCHGNLCCSHWGFCGTTAIYCDVDQGCQSQCWS) constitute a Chitin-binding type-1 1 domain. Disulfide bonds link C26–C41, C35–C47, C40–C54, and C60–C64. A disordered region spans residues 65–127 (WSSPPPPSPP…PGGPERPDHR (63 aa)). Residues 67 to 121 (SPPPPSPPPPPPSPPPPSPPPPSPPPPSPPPPSPPPPSPPPPSPPPPSPPPPGGP) are compositionally biased toward pro residues. The region spanning 125–167 (DHRCGRALGNPPCNPGRCCSIHNWCGSTAAYCRGSSCQYQCWN) is the Chitin-binding type-1 2 domain. 4 cysteine pairs are disulfide-bonded: C128–C143, C137–C149, C142–C156, and C161–C165. An N-linked (GlcNAc...) asparagine glycan is attached at N264.

In terms of processing, glycosylated.

It localises to the secreted. Functionally, chitin-binding protein which slows larval growth when consumed by the lepidopteran species S.ricini and M.brassica, but not when consumed by the mulberry specialist B.mori. Lacks chitinase activity. The chain is Mulatexin from Morus alba (White mulberry).